A 592-amino-acid polypeptide reads, in one-letter code: MSNSVKGEIVKIAGPVVEAVGCEGAKMYEVFRVGDEGLIGEVINIESDRATIQVYEETTGLQPGEPVKGTGELLSVELGPGLLTQIFDGIQRPLPEIRKEVGDFVERGILVSALDRKKKWEFTPKVKEGEKVEEGDVLGTVPETEFIEHKIMVPPGVSGEVIEIAADGEYTVEDTIAVIEDEEGEEHEVTMMQEWPVRKPRPYKRKLDPEEPLITGQRVIDTFFPVAKGGTAAIPGPFGSGKTVTQQQLAKWADAQVVVYIGCGERGNEMTEVLEDFPELEDPRTGRPLMERTILVANTSNMPVAAREACIYTGITMAEYYRDMGYDVALMADSTSRWAEALREISGRLEEMPGEEGYPAYLASRLAEFYERAGRVVCLGSDDRVGSVTVVGAVSPPGGDFSEPVTQNTLRIVKVFWALDSKLADRRHFPAINWLQSYSLYLDDVEKWWHEEIGGDWRELRDEAMEILQRESELEEIVQLVGPDALPESERLILEVARMIREDFLQQNAFHEVDTYCPPEKQYEMLKTILHFKERAEEAVDKGVPVDEILKLDVIDDIARMKVIPNEEAKEKIQEIRKKIDEQFEELIEEAS.

236–243 (GPFGSGKT) contributes to the ATP binding site.

It belongs to the ATPase alpha/beta chains family. In terms of assembly, has multiple subunits with at least A(3), B(3), C, D, E, F, H, I and proteolipid K(x).

The protein localises to the cell membrane. It carries out the reaction ATP + H2O + 4 H(+)(in) = ADP + phosphate + 5 H(+)(out). Its function is as follows. Component of the A-type ATP synthase that produces ATP from ADP in the presence of a proton gradient across the membrane. The A chain is the catalytic subunit. This chain is A-type ATP synthase subunit A, found in Methanopyrus kandleri (strain AV19 / DSM 6324 / JCM 9639 / NBRC 100938).